The sequence spans 491 residues: Ran-binding protein 3-like (491 aa).

One can recognise a RanBD1 domain in the interval 270–441 (TFKSVLKFPN…VALRSLAKQG (172 aa)). The segment at 440–468 (QGDGGPAESQSDTALPQLNGESCDEDEDE) is disordered. Polar residues predominate over residues 447 to 459 (ESQSDTALPQLNG).

Interacts with SMAD1, SMAD5 and SMAD8.

The protein resides in the nucleus. It localises to the cytoplasm. Nuclear export factor for BMP-specific SMAD1/5/8 that plays a critical role in terminating BMP signaling and regulating mesenchymal stem cell differentiation by blocking osteoblast differentiation to promote myogenic differention. Directly recognizes dephosphorylated SMAD1/5/8 and mediates their nuclear export in a Ran-dependent manner. The sequence is that of Ran-binding protein 3-like (Ranbp3l) from Mus musculus (Mouse).